The chain runs to 391 residues: Probable inactive allantoicase (391 aa).

This sequence belongs to the allantoicase family.

Its function is as follows. The function of this enzyme is unclear as allantoicase activity is not known to exist in mammals. In Homo sapiens (Human), this protein is Probable inactive allantoicase.